The sequence spans 214 residues: Holliday junction branch migration complex subunit RuvA (214 aa).

The segment at 1 to 63 (MIASLSGTVE…EDALTLYGFA (63 aa)) is domain I. The tract at residues 64–142 (DRDEREVFEV…PTGEPVPGAE (79 aa)) is domain II. The interval 143 to 151 (AEASDEPAV) is flexible linker. The domain III stretch occupies residues 151-214 (VETVWHADVV…GMAGAVRGGR (64 aa)).

It belongs to the RuvA family. Homotetramer. Forms an RuvA(8)-RuvB(12)-Holliday junction (HJ) complex. HJ DNA is sandwiched between 2 RuvA tetramers; dsDNA enters through RuvA and exits via RuvB. An RuvB hexamer assembles on each DNA strand where it exits the tetramer. Each RuvB hexamer is contacted by two RuvA subunits (via domain III) on 2 adjacent RuvB subunits; this complex drives branch migration. In the full resolvosome a probable DNA-RuvA(4)-RuvB(12)-RuvC(2) complex forms which resolves the HJ.

It is found in the cytoplasm. Functionally, the RuvA-RuvB-RuvC complex processes Holliday junction (HJ) DNA during genetic recombination and DNA repair, while the RuvA-RuvB complex plays an important role in the rescue of blocked DNA replication forks via replication fork reversal (RFR). RuvA specifically binds to HJ cruciform DNA, conferring on it an open structure. The RuvB hexamer acts as an ATP-dependent pump, pulling dsDNA into and through the RuvAB complex. HJ branch migration allows RuvC to scan DNA until it finds its consensus sequence, where it cleaves and resolves the cruciform DNA. The sequence is that of Holliday junction branch migration complex subunit RuvA from Micrococcus luteus (strain ATCC 4698 / DSM 20030 / JCM 1464 / CCM 169 / CCUG 5858 / IAM 1056 / NBRC 3333 / NCIMB 9278 / NCTC 2665 / VKM Ac-2230) (Micrococcus lysodeikticus).